A 202-amino-acid polypeptide reads, in one-letter code: MSRYRGPRLRIVRRLGDLPGLTRKSARRAYPPGQHGQNRKKRSEYAIRLEEKQKLRLNYGLTEKQLLRYVRRARRVTGSTGQVLLQLLEMRLDNTVFRLGMAPTIPAARQLVNHGHVTVNGRVVNIASYQCRPGEEIAVRDKAPSRKLVENNLQYPGLANLPSHLEFDKNKLVGKVNGVIEREWVALQVNELLVVEYYSRQA.

Residues 22 to 43 (TRKSARRAYPPGQHGQNRKKRS) form a disordered region. The region spanning 90 to 152 (MRLDNTVFRL…APSRKLVENN (63 aa)) is the S4 RNA-binding domain.

Belongs to the universal ribosomal protein uS4 family. In terms of assembly, part of the 30S ribosomal subunit. Contacts protein S5. The interaction surface between S4 and S5 is involved in control of translational fidelity.

One of the primary rRNA binding proteins, it binds directly to 16S rRNA where it nucleates assembly of the body of the 30S subunit. Functionally, with S5 and S12 plays an important role in translational accuracy. This Trichormus variabilis (strain ATCC 29413 / PCC 7937) (Anabaena variabilis) protein is Small ribosomal subunit protein uS4.